Consider the following 644-residue polypeptide: Exoribonuclease 2 (644 aa).

Residues 189-516 enclose the RNB domain; it reads REDLTALDFV…NHRLLKAVIK (328 aa). The region spanning 561 to 643 is the S1 motif domain; the sequence is DTRFAAEIVD…ETRSIIARPV (83 aa).

It belongs to the RNR ribonuclease family. RNase II subfamily.

Its subcellular location is the cytoplasm. The enzyme catalyses Exonucleolytic cleavage in the 3'- to 5'-direction to yield nucleoside 5'-phosphates.. Its function is as follows. Involved in mRNA degradation. Hydrolyzes single-stranded polyribonucleotides processively in the 3' to 5' direction. This is Exoribonuclease 2 from Shigella dysenteriae serotype 1 (strain Sd197).